Consider the following 1324-residue polypeptide: Structural maintenance of chromosomes protein 4 (1324 aa).

The segment at 1 to 24 (MSDKGIFRTSSTPSIVDVTPDRGE) is disordered. Threonine 19 carries the phosphothreonine; by CDC2 modification. 155–162 (GPNGSGKS) serves as a coordination point for ATP. 2 coiled-coil regions span residues 310-337 (QELS…AKLE) and 370-628 (NKKT…KASL). Residues 651–764 (NGFFGRLGDL…KNLEQANRIA (114 aa)) form the SMC hinge domain. Coiled coils occupy residues 825–1077 (YRQH…MSNL) and 1297–1324 (LSSR…ILTD).

It belongs to the SMC family. SMC4 subfamily. As to quaternary structure, forms a heterodimer with cut14/smc2. Component of the condensin complex, which contains the smc2 and smc4 heterodimer, and three non smc subunits that probably regulate the complex: cnd1, cnd2 and cnd3. Interacts with C1739.07. Post-translationally, phosphorylated by CDC2 on Thr-19 at metaphase.

It localises to the nucleus. Its subcellular location is the cytoplasm. It is found in the chromosome. Functionally, central component of the condensin complex, a complex required for conversion of interphase chromatin into mitotic-like condense chromosomes. The condensin complex probably introduces positive supercoils into relaxed DNA in the presence of type I topoisomerases and converts nicked DNA into positive knotted forms in the presence of type II topoisomerases. The chain is Structural maintenance of chromosomes protein 4 (cut3) from Schizosaccharomyces pombe (strain 972 / ATCC 24843) (Fission yeast).